We begin with the raw amino-acid sequence, 256 residues long: Protein YIPF5 (256 aa).

Residues 1–125 (MSNFDNFNTD…ADGSIMNETD (125 aa)) are Cytoplasmic-facing. A helical transmembrane segment spans residues 126–146 (LAGPMVFCLAFGATLLLAGKI). Residue Q147 is a topological domain, lumenal. Residues 148 to 168 (FGYVYGISAMGCLGMYCLLNL) traverse the membrane as a helical segment. Residues 169–172 (MSMT) lie on the Cytoplasmic side of the membrane. The chain crosses the membrane as a helical span at residues 173–193 (GVSFGCVSSVLGYCLLPMIIL). Topologically, residues 194–195 (ST) are lumenal. Residues 196-216 (FAVIFSLQGILGIVLAALIIG) traverse the membrane as a helical segment. The Cytoplasmic segment spans residues 217 to 235 (WCSFSASKIFISALAMDGQ). The helical transmembrane segment at 236 to 256 (QLLVAYPCALLYGVFALISVF) threads the bilayer.

Belongs to the YIP1 family.

Its subcellular location is the endoplasmic reticulum membrane. The protein resides in the golgi apparatus. The protein localises to the cis-Golgi network membrane. Its function is as follows. Plays a role in transport between endoplasmic reticulum and Golgi. The sequence is that of Protein YIPF5 (yipf5) from Xenopus laevis (African clawed frog).